A 225-amino-acid chain; its full sequence is ATP-dependent Clp protease proteolytic subunit (225 aa).

S123 serves as the catalytic Nucleophile. H148 is a catalytic residue.

The protein belongs to the peptidase S14 family. In terms of assembly, fourteen ClpP subunits assemble into 2 heptameric rings which stack back to back to give a disk-like structure with a central cavity, resembling the structure of eukaryotic proteasomes.

It is found in the cytoplasm. It catalyses the reaction Hydrolysis of proteins to small peptides in the presence of ATP and magnesium. alpha-casein is the usual test substrate. In the absence of ATP, only oligopeptides shorter than five residues are hydrolyzed (such as succinyl-Leu-Tyr-|-NHMec, and Leu-Tyr-Leu-|-Tyr-Trp, in which cleavage of the -Tyr-|-Leu- and -Tyr-|-Trp bonds also occurs).. Its function is as follows. Cleaves peptides in various proteins in a process that requires ATP hydrolysis. Has a chymotrypsin-like activity. Plays a major role in the degradation of misfolded proteins. The polypeptide is ATP-dependent Clp protease proteolytic subunit (Chlorobaculum tepidum (strain ATCC 49652 / DSM 12025 / NBRC 103806 / TLS) (Chlorobium tepidum)).